Here is a 339-residue protein sequence, read N- to C-terminus: Anthranilate phosphoribosyltransferase (339 aa).

Residues glycine 79, 82–83, serine 87, 89–92, 107–115, and serine 119 each bind 5-phospho-alpha-D-ribose 1-diphosphate; these read GD, NIST, and KHGNRSVSS. Glycine 79 is a binding site for anthranilate. Serine 91 contributes to the Mg(2+) binding site. Residue asparagine 110 coordinates anthranilate. Arginine 165 provides a ligand contact to anthranilate. The Mg(2+) site is built by aspartate 224 and glutamate 225.

This sequence belongs to the anthranilate phosphoribosyltransferase family. As to quaternary structure, homodimer. Mg(2+) serves as cofactor.

It carries out the reaction N-(5-phospho-beta-D-ribosyl)anthranilate + diphosphate = 5-phospho-alpha-D-ribose 1-diphosphate + anthranilate. Its pathway is amino-acid biosynthesis; L-tryptophan biosynthesis; L-tryptophan from chorismate: step 2/5. Catalyzes the transfer of the phosphoribosyl group of 5-phosphorylribose-1-pyrophosphate (PRPP) to anthranilate to yield N-(5'-phosphoribosyl)-anthranilate (PRA). This Exiguobacterium sibiricum (strain DSM 17290 / CCUG 55495 / CIP 109462 / JCM 13490 / 255-15) protein is Anthranilate phosphoribosyltransferase.